The sequence spans 258 residues: uncharacterized protein (258 aa).

A run of 6 helical transmembrane segments spans residues 21–41 (LIWL…TIYY), 73–93 (LSQF…GSVA), 119–139 (WLIQ…LAYY), 153–173 (FAAS…AGLA), 182–202 (GAAA…VSLF), and 229–249 (FFGW…VFSV).

It localises to the cell membrane. This is an uncharacterized protein from Bacillus subtilis (strain 168).